The primary structure comprises 175 residues: Transcription factor E (175 aa).

The 85-residue stretch at 4–88 (AEDLFINLAK…YWKPNIDQIN (85 aa)) folds into the HTH TFE/IIEalpha-type domain.

Belongs to the TFE family. As to quaternary structure, monomer. Interaction with RNA polymerase subunits RpoF and RpoE is necessary for Tfe stimulatory transcription activity. Able to interact with Tbp and RNA polymerase in the absence of DNA promoter. Interacts both with the preinitiation and elongation complexes.

Transcription factor that plays a role in the activation of archaeal genes transcribed by RNA polymerase. Facilitates transcription initiation by enhancing TATA-box recognition by TATA-box-binding protein (Tbp), and transcription factor B (Tfb) and RNA polymerase recruitment. Not absolutely required for transcription in vitro, but particularly important in cases where Tbp or Tfb function is not optimal. It dynamically alters the nucleic acid-binding properties of RNA polymerases by stabilizing the initiation complex and destabilizing elongation complexes. Seems to translocate with the RNA polymerase following initiation and acts by binding to the non template strand of the transcription bubble in elongation complexes. This chain is Transcription factor E, found in Saccharolobus islandicus (strain Y.N.15.51 / Yellowstone #2) (Sulfolobus islandicus).